Consider the following 552-residue polypeptide: FERRY endosomal RAB5 effector complex subunit 3 (552 aa).

A Phosphoserine modification is found at serine 79.

Component of the FERRY complex composed of five subunits, TBCK, PPP1R21, FERRY3, CRYZL1 and GATD1 with a ratio of 1:2:1:2:4, respectively.

It is found in the cytoplasm. The protein localises to the early endosome. Its function is as follows. Component of the FERRY complex (Five-subunit Endosomal Rab5 and RNA/ribosome intermediary). The FERRY complex directly interacts with mRNAs and RAB5A, and functions as a RAB5A effector involved in the localization and the distribution of specific mRNAs most likely by mediating their endosomal transport. The complex recruits mRNAs and ribosomes to early endosomes through direct mRNA-interaction. Plays a role in mast cell degranulation. This chain is FERRY endosomal RAB5 effector complex subunit 3, found in Mus musculus (Mouse).